A 502-amino-acid chain; its full sequence is Keratin, type II microfibrillar, component 5 (502 aa).

Blocked amino end (Ser) is present on serine 1. A head region spans residues 1–122 (SCRSYRISPG…PNAQCVKHQE (122 aa)). The region spanning 122–433 (EKEQIKNLNS…RLLEGEEQRL (312 aa)) is the IF rod domain. Residues 123-157 (KEQIKNLNSRFAAFIDKVRFLEQQNKLLETKWQFY) form a coil 1A region. The segment at 158 to 167 (QNQRCCESNL) is linker 1. The coil 1B stretch occupies residues 168–268 (EPLFNGYIET…YDEEIQILNA (101 aa)). Lysine 228 participates in a covalent cross-link: Glycyl lysine isopeptide (Lys-Gly) (interchain with G-Cter in SUMO1). A linker 12 region spans residues 269-285 (HISDTSVIVKMDNSRDL). The coil 2 stretch occupies residues 286 to 429 (NMDCVVAEIK…ATYRRLLEGE (144 aa)). Residues 430-502 (EQRLCEGVGS…CGSSRSVRFA (73 aa)) form a tail region.

The protein belongs to the intermediate filament family. Hard keratin wool.

Its function is as follows. Wool microfibrillar keratin. The protein is Keratin, type II microfibrillar, component 5 of Ovis aries (Sheep).